The sequence spans 156 residues: Small ribosomal subunit protein uS7 (156 aa).

The protein belongs to the universal ribosomal protein uS7 family. As to quaternary structure, part of the 30S ribosomal subunit. Contacts proteins S9 and S11.

One of the primary rRNA binding proteins, it binds directly to 16S rRNA where it nucleates assembly of the head domain of the 30S subunit. Is located at the subunit interface close to the decoding center, probably blocks exit of the E-site tRNA. The polypeptide is Small ribosomal subunit protein uS7 (Sodalis glossinidius (strain morsitans)).